The chain runs to 298 residues: UDP-3-O-acyl-N-acetylglucosamine deacetylase (298 aa).

The Zn(2+) site is built by histidine 79, histidine 239, and aspartate 243. Histidine 266 serves as the catalytic Proton donor.

It belongs to the LpxC family. It depends on Zn(2+) as a cofactor.

It carries out the reaction a UDP-3-O-[(3R)-3-hydroxyacyl]-N-acetyl-alpha-D-glucosamine + H2O = a UDP-3-O-[(3R)-3-hydroxyacyl]-alpha-D-glucosamine + acetate. It functions in the pathway glycolipid biosynthesis; lipid IV(A) biosynthesis; lipid IV(A) from (3R)-3-hydroxytetradecanoyl-[acyl-carrier-protein] and UDP-N-acetyl-alpha-D-glucosamine: step 2/6. Its function is as follows. Catalyzes the hydrolysis of UDP-3-O-myristoyl-N-acetylglucosamine to form UDP-3-O-myristoylglucosamine and acetate, the committed step in lipid A biosynthesis. The chain is UDP-3-O-acyl-N-acetylglucosamine deacetylase from Wigglesworthia glossinidia brevipalpis.